The primary structure comprises 238 residues: ATP synthase subunit a (238 aa).

The next 5 helical transmembrane spans lie at 18-38 (LTLL…VFWA), 76-96 (YSLL…LGLF), 114-134 (NLAF…IEGV), 166-186 (SLAI…GLIV), and 193-213 (VYWW…SVFI).

This sequence belongs to the ATPase A chain family. F-type ATPases have 2 components, CF(1) - the catalytic core - and CF(0) - the membrane proton channel. CF(1) has five subunits: alpha(3), beta(3), gamma(1), delta(1), epsilon(1). CF(0) has three main subunits: a(1), b(2) and c(9-12). The alpha and beta chains form an alternating ring which encloses part of the gamma chain. CF(1) is attached to CF(0) by a central stalk formed by the gamma and epsilon chains, while a peripheral stalk is formed by the delta and b chains.

The protein resides in the cell membrane. Its function is as follows. Key component of the proton channel; it plays a direct role in the translocation of protons across the membrane. The sequence is that of ATP synthase subunit a from Streptococcus pyogenes serotype M5 (strain Manfredo).